The sequence spans 136 residues: MARTKQTARKSTGGKAPRKQLATKAARKSAPTTGGVKKPHRYRPGTVALREIRKYQKSTELLIRKLPFQRLVREIAQDFKTDLRFQSHAVLALQEAAEAYLVGLFEDTNLCAIHAKRVTIMPKDIQLARRIRGERA.

A disordered region spans residues 1 to 43 (MARTKQTARKSTGGKAPRKQLATKAARKSAPTTGGVKKPHRYR). N6-methylated lysine is present on Lys-5. Lys-10 bears the N6-acetyllysine; alternate mark. An N6-methylated lysine; alternate modification is found at Lys-10. A Phosphoserine modification is found at Ser-11. At Thr-12 the chain carries Phosphothreonine. Lys-15 is subject to N6-acetyllysine. N6-acetyllysine; alternate occurs at positions 19 and 24. Residues Lys-19 and Lys-24 each carry the N6-methylated lysine; alternate modification. Lys-28 carries the post-translational modification N6-methylated lysine. Ser-29 carries the phosphoserine modification. Lys-37 carries the N6-methylated lysine modification.

It belongs to the histone H3 family. As to quaternary structure, the nucleosome is a histone octamer containing two molecules each of H2A, H2B, H3 and H4 assembled in one H3-H4 heterotetramer and two H2A-H2B heterodimers. The octamer wraps approximately 147 bp of DNA. Acetylation is generally linked to gene activation. Can be acetylated to form H3K9ac, H3K14ac, H3K18ac and H3K23ac. H3K9ac could compete with H3K9me and prevent gene silencing. H3K9ac is restricted to euchromatin. In terms of processing, methylated to form mainly H3K4me, H3K9me, H3K18me, H3K23me, H3K27me and H3K36me. H3K4me1/2/3, H3K9me3, H3K27me3 and H3K36me1/2/3 are typical marks for euchromatin, whereas heterochromatic chromocenters are enriched in H3K9me1/2 and H3K27me1/2. H2BK143ub1 is probably prerequisite for H3K4me. Post-translationally, can be phosphorylated to form H3S10ph, H3T11ph and H3S28ph.

It localises to the nucleus. It is found in the chromosome. In terms of biological role, variant histone H3 which replaces conventional H3 in a wide range of nucleosomes in active genes. Constitutes the predominant form of histone H3 in non-dividing cells and is incorporated into chromatin independently of DNA synthesis. Deposited at sites of nucleosomal displacement throughout transcribed genes, suggesting that it represents an epigenetic imprint of transcriptionally active chromatin. Nucleosomes wrap and compact DNA into chromatin, limiting DNA accessibility to the cellular machineries which require DNA as a template. Histones thereby play a central role in transcription regulation, DNA repair, DNA replication and chromosomal stability. DNA accessibility is regulated via a complex set of post-translational modifications of histones, also called histone code, and nucleosome remodeling. This is Histone H3.3 (HIS3) from Gossypium hirsutum (Upland cotton).